The sequence spans 250 residues: Leucyl/phenylalanyl-tRNA--protein transferase (250 aa).

This sequence belongs to the L/F-transferase family.

It localises to the cytoplasm. The enzyme catalyses N-terminal L-lysyl-[protein] + L-leucyl-tRNA(Leu) = N-terminal L-leucyl-L-lysyl-[protein] + tRNA(Leu) + H(+). The catalysed reaction is N-terminal L-arginyl-[protein] + L-leucyl-tRNA(Leu) = N-terminal L-leucyl-L-arginyl-[protein] + tRNA(Leu) + H(+). It catalyses the reaction L-phenylalanyl-tRNA(Phe) + an N-terminal L-alpha-aminoacyl-[protein] = an N-terminal L-phenylalanyl-L-alpha-aminoacyl-[protein] + tRNA(Phe). In terms of biological role, functions in the N-end rule pathway of protein degradation where it conjugates Leu, Phe and, less efficiently, Met from aminoacyl-tRNAs to the N-termini of proteins containing an N-terminal arginine or lysine. In Xanthomonas oryzae pv. oryzae (strain MAFF 311018), this protein is Leucyl/phenylalanyl-tRNA--protein transferase.